The primary structure comprises 402 residues: B3 domain-containing protein LFL1 (402 aa).

The disordered stretch occupies residues 1–174 (MRGEERWQEQ…AAPRPSSHHT (174 aa)). Low complexity predominate over residues 74 to 87 (ARPPTLAASAAAAS). A compositionally biased stretch (pro residues) spans 88–102 (SPPPPPPPPIPPLPP). Composition is skewed to low complexity over residues 103–139 (STSTSAARPTDMAGVTSKRRSSSASTSSSSGDGAAVS) and 156–169 (PRPAASLRPAAPRP). Residues 181–284 (LQKELRYSDV…RFVIGAKKAG (104 aa)) constitute a DNA-binding region (TF-B3). The segment at 381 to 402 (LHVTDDKSGHSLIPNPKSGPHM) is disordered.

In terms of tissue distribution, expressed in anthers, pollen grains and young developing embryos.

It is found in the nucleus. Functionally, transcription repressor involved in flowering time regulation. Represses the flowering activator EHD1 by binding specifically to the DNA sequence 5'-CATGCATG-3 of its promoter. The protein is B3 domain-containing protein LFL1 (LFL1) of Oryza sativa subsp. japonica (Rice).